The following is a 354-amino-acid chain: G protein alpha o subunit (354 aa).

The N-myristoyl glycine moiety is linked to residue Gly-2. Cys-3 is lipidated: S-palmitoyl cysteine. In terms of domain architecture, G-alpha spans 32 to 354 (KDIKLLLLGA…ANNLRGCGLY (323 aa)). The segment at 35 to 48 (KLLLLGAGESGKST) is G1 motif. GTP is bound by residues 40–47 (GAGESGKS), 176–182 (LRTRVKT), 201–205 (DVGGQ), 270–273 (NKKD), and Ala-326. Mg(2+)-binding residues include Ser-47 and Thr-182. The tract at residues 174 to 182 (DILRTRVKT) is G2 motif. Residues 197 to 206 (FKLFDVGGQR) are G3 motif. Residues 266-273 (ILFLNKKD) are G4 motif. The segment at 324 to 329 (TCATDT) is G5 motif.

This sequence belongs to the G-alpha family. G(i/o/t/z) subfamily. As to quaternary structure, g proteins are composed of 3 units; alpha, beta and gamma. The alpha chain contains the guanine nucleotide binding site. In terms of tissue distribution, expressed primarily in neuronal cell bodies in the brain, optic lobe, and thoracic and abdominal ganglia. Also expressed in antenna, oocytes and ovarian nurse cells.

Functionally, guanine nucleotide-binding proteins (G proteins) are involved as modulators or transducers in various transmembrane signaling systems. Plays a role in glial cell differentiation during embryogenesis; loco, Galphai and the G-protein coupled receptor, moody, are required in the surface glia to achieve effective insulation of the nerve cord. The protein is G protein alpha o subunit (Galphao) of Drosophila melanogaster (Fruit fly).